A 470-amino-acid chain; its full sequence is Cyclic AMP-responsive element-binding protein 3-like protein 3 (470 aa).

Residues 1–319 (MDGDISTGKM…TSKPAHAGTC (319 aa)) are Cytoplasmic-facing. The segment at 59–145 (SDSDEFLNSI…PEPPRTQVHE (87 aa)) is disordered. One can recognise a bZIP domain in the interval 239-302 (VLKKIRRKIR…LSLLEQLKHL (64 aa)). Residues 241 to 270 (KKIRRKIRNKQSAQESRKKKKEYIDGLENR) form a basic motif region. The segment at 281 to 302 (LQRKVLHLEKQNLSLLEQLKHL) is leucine-zipper. K290 is covalently cross-linked (Glycyl lysine isopeptide (Lys-Gly) (interchain with G-Cter in ubiquitin)). Residues 320 to 340 (IAVLLLSFVLIILPSISPFTA) traverse the membrane as a helical; Signal-anchor for type II membrane protein segment. Residues 341-470 (NKVDSPGDFI…RVVQDALGVL (130 aa)) lie on the Lumenal side of the membrane. 2 N-linked (GlcNAc...) asparagine glycosylation sites follow: N410 and N417.

It belongs to the bZIP family. ATF subfamily. Binds DNA as a dimer. May form homodimers. Interacts with ATF6. Interacts with SYNV1/HRD1; this interaction leads to CREB3L3 ubiquitination and proteasomal degradation. In terms of processing, controlled by regulated intramembrane proteolysis (RIP). Following ER stress a fragment containing the cytoplasmic transcription factor domain is released by proteolysis. The cleavage seems to be performed sequentially by site-1 and site-2 proteases (PS1 and PS2). Post-translationally, N-glycosylation is required for optimal proteolytic activation. Ubiquitinated at Lys-290 by SYNV1/HRD1 via 'Lys-27'-linked ubiquitin.

It is found in the endoplasmic reticulum membrane. The protein resides in the nucleus. Functionally, transcription factor that may act during endoplasmic reticulum stress by activating unfolded protein response target genes. Activated in response to cAMP stimulation. Binds the cAMP response element (CRE). Activates transcription through box-B element and CRE. Seems to function synergistically with ATF6. In acute inflammatory response, may activate expression of acute phase response (APR) genes. May be involved in growth suppression. Regulates FGF21 transcription. Plays a crucial role in the regulation of triglyceride metabolism and is required for the maintenance of normal plasma triglyceride concentrations. This Rattus norvegicus (Rat) protein is Cyclic AMP-responsive element-binding protein 3-like protein 3 (Creb3l3).